The following is a 410-amino-acid chain: Divergent protein kinase domain 1C (410 aa).

Residues 1–19 (MARAAGERGRAARCGRWRR) are Cytoplasmic-facing. The short motif at 18–19 (RR) is the May mediate ER retention element. Residues 20 to 40 (GALLAFAAWTAGWVLAAALLL) traverse the membrane as a helical segment. Residues 41–410 (RAHPSVLSER…TLKELQEAEK (370 aa)) lie on the Lumenal side of the membrane.

The protein belongs to the DIPK family. Post-translationally, among the many cysteines in the lumenal domain, most are probably involved in disulfide bonds. Mainly expressed in the brain and eye, some expression in kidney and skeletal muscle.

The protein localises to the endoplasmic reticulum membrane. This is Divergent protein kinase domain 1C (Dipk1c) from Mus musculus (Mouse).